Here is a 399-residue protein sequence, read N- to C-terminus: Rho GTPase-activating protein gacC (399 aa).

The span at 1–13 shows a compositional bias: basic and acidic residues; that stretch reads MESKDQNVYRKGS. A disordered region spans residues 1–80; sequence MESKDQNVYR…SSSTSTTPVK (80 aa). Residues 14–31 show a composition bias toward polar residues; it reads DNFSKGSNTFFGNLKSIS. Residues 61-79 show a composition bias toward low complexity; sequence SVDSSSSNPSSSSTSTTPV. The Rho-GAP domain occupies 186–375; the sequence is VELEESFKTA…NLISFFQQIF (190 aa).

The protein resides in the cytoplasm. In terms of biological role, rho GTPase-activating protein involved in the signal transduction pathway. The protein is Rho GTPase-activating protein gacC (gacC) of Dictyostelium discoideum (Social amoeba).